Reading from the N-terminus, the 365-residue chain is Carbohydrate sulfotransferase 10 (365 aa).

The Cytoplasmic segment spans residues 1–6 (MRRHWL). Residues 7-27 (LVGACGWVLLILMFVSKFINF) traverse the membrane as a helical; Signal-anchor for type II membrane protein segment. Topologically, residues 28–356 (SFRIPGDYAG…RYQGDFSLFD (329 aa)) are lumenal. N-linked (GlcNAc...) asparagine glycans are attached at residues Asn99 and Asn104. Residues 132–138 (PKVGNTQ) and 194–202 (RDPFERLIS) each bind 3'-phosphoadenylyl sulfate. N-linked (GlcNAc...) asparagine glycosylation occurs at Asn325.

The protein belongs to the sulfotransferase 2 family.

The protein resides in the golgi apparatus membrane. Catalyzes the transfer of sulfate to position 3 of terminal glucuronic acid of both protein- and lipid-linked oligosaccharides. Participates in biosynthesis of HNK-1 carbohydrate structure, a sulfated glucuronyl-lactosaminyl residue carried by many neural recognition molecules. This Danio rerio (Zebrafish) protein is Carbohydrate sulfotransferase 10 (chst10).